The chain runs to 590 residues: Arginine--tRNA ligase (590 aa).

The 'HIGH' region motif lies at 132–142 (PNTNKPLHLGH).

Belongs to the class-I aminoacyl-tRNA synthetase family. In terms of assembly, monomer.

It localises to the cytoplasm. It carries out the reaction tRNA(Arg) + L-arginine + ATP = L-arginyl-tRNA(Arg) + AMP + diphosphate. The sequence is that of Arginine--tRNA ligase from Treponema denticola (strain ATCC 35405 / DSM 14222 / CIP 103919 / JCM 8153 / KCTC 15104).